The following is a 425-amino-acid chain: 3-phosphoshikimate 1-carboxyvinyltransferase (425 aa).

3-phosphoshikimate is bound by residues K22, S23, and R27. Residue K22 coordinates phosphoenolpyruvate. G95 and R123 together coordinate phosphoenolpyruvate. 3-phosphoshikimate is bound by residues S169, S170, Q171, S197, D313, N336, and K340. Q171 contacts phosphoenolpyruvate. The active-site Proton acceptor is the D313. Residues R344, R386, and K411 each contribute to the phosphoenolpyruvate site.

This sequence belongs to the EPSP synthase family. As to quaternary structure, monomer.

It localises to the cytoplasm. The enzyme catalyses 3-phosphoshikimate + phosphoenolpyruvate = 5-O-(1-carboxyvinyl)-3-phosphoshikimate + phosphate. It functions in the pathway metabolic intermediate biosynthesis; chorismate biosynthesis; chorismate from D-erythrose 4-phosphate and phosphoenolpyruvate: step 6/7. Its function is as follows. Catalyzes the transfer of the enolpyruvyl moiety of phosphoenolpyruvate (PEP) to the 5-hydroxyl of shikimate-3-phosphate (S3P) to produce enolpyruvyl shikimate-3-phosphate and inorganic phosphate. The chain is 3-phosphoshikimate 1-carboxyvinyltransferase from Marinomonas sp. (strain MWYL1).